The following is a 447-amino-acid chain: Ribosomal protein uS12 methylthiotransferase RimO (447 aa).

One can recognise an MTTase N-terminal domain in the interval 4–114 (PKVGFVSLGC…VMEAVHEYVP (111 aa)). [4Fe-4S] cluster-binding residues include cysteine 13, cysteine 49, cysteine 78, cysteine 147, cysteine 151, and cysteine 154. One can recognise a Radical SAM core domain in the interval 133-370 (LTPKHYAYLK…MQVQQQISAA (238 aa)). The 71-residue stretch at 373–443 (QKRIGQTMTV…EYDLFAKLIK (71 aa)) folds into the TRAM domain.

It belongs to the methylthiotransferase family. RimO subfamily. [4Fe-4S] cluster serves as cofactor.

The protein localises to the cytoplasm. It carries out the reaction L-aspartate(89)-[ribosomal protein uS12]-hydrogen + (sulfur carrier)-SH + AH2 + 2 S-adenosyl-L-methionine = 3-methylsulfanyl-L-aspartate(89)-[ribosomal protein uS12]-hydrogen + (sulfur carrier)-H + 5'-deoxyadenosine + L-methionine + A + S-adenosyl-L-homocysteine + 2 H(+). Catalyzes the methylthiolation of an aspartic acid residue of ribosomal protein uS12. This is Ribosomal protein uS12 methylthiotransferase RimO from Acinetobacter baumannii (strain SDF).